Consider the following 333-residue polypeptide: MKRLLNSATQLLLVLVLGISLSGCVTTHVPTATTSPWQAMDLDTQANPLDVAFTDSSHGYLVGSNRMIRETNDGGAHWNERSLDLPDEENFRLISIDFSGDEGWIAGQPGLLMHSDDGGQNWTRLFLDTKLPGEPYLITALGSHSAELATNVGAVYETHNDGSSWEAKVTDAAGAVRDLRRSKDGSYVSVSGLGNFYATWEPGDSVWQVHQRVSSQRLQSIGFQPDGNLWMVARGAQIRLNDEPGDFDSWSKAIIPITNGYGYMDLAWDDDGAIWAGGGNGTLLVSRDGGDSWENDPVGDRQPSNFTRMVFDGEHAFVLGERGNLLRWVDNAV.

The signal sequence occupies residues 1-23 (MKRLLNSATQLLLVLVLGISLSG). The N-palmitoyl cysteine moiety is linked to residue cysteine 24. Residue cysteine 24 is the site of S-diacylglycerol cysteine attachment.

The protein belongs to the Ycf48 family. Part of early PSII assembly complexes which includes D1 (psbA) and PsbI; not found in mature PSII. Binds to the lumenal side of PSII complexes. Interacts with YidC.

The protein localises to the cellular thylakoid membrane. Its function is as follows. A factor required for optimal assembly of photosystem II (PSII), acting in the early stages of PSII assembly. Also plays a role in replacement of photodamaged D1 (psbA). Assists YidC in synthesis of chlorophyll-binding proteins. This chain is Photosystem II assembly lipoprotein Ycf48, found in Synechococcus sp. (strain CC9605).